Reading from the N-terminus, the 475-residue chain is Sulfate adenylyltransferase subunit 1 (475 aa).

The 217-residue stretch at 25–241 (KSLLRFLTCG…LENIEIQRVV (217 aa)) folds into the tr-type G domain. Positions 34 to 41 (GSVDDGKS) are G1. 34-41 (GSVDDGKS) lines the GTP pocket. The tract at residues 92 to 96 (GITID) is G2. The tract at residues 113–116 (DTPG) is G3. Residues 113 to 117 (DTPGH) and 168 to 171 (NKMD) contribute to the GTP site. A G4 region spans residues 168–171 (NKMD). The interval 206–208 (SAL) is G5.

The protein belongs to the TRAFAC class translation factor GTPase superfamily. Classic translation factor GTPase family. CysN/NodQ subfamily. In terms of assembly, heterodimer composed of CysD, the smaller subunit, and CysN.

It catalyses the reaction sulfate + ATP + H(+) = adenosine 5'-phosphosulfate + diphosphate. Its pathway is sulfur metabolism; hydrogen sulfide biosynthesis; sulfite from sulfate: step 1/3. With CysD forms the ATP sulfurylase (ATPS) that catalyzes the adenylation of sulfate producing adenosine 5'-phosphosulfate (APS) and diphosphate, the first enzymatic step in sulfur assimilation pathway. APS synthesis involves the formation of a high-energy phosphoric-sulfuric acid anhydride bond driven by GTP hydrolysis by CysN coupled to ATP hydrolysis by CysD. The chain is Sulfate adenylyltransferase subunit 1 from Cronobacter sakazakii (strain ATCC BAA-894) (Enterobacter sakazakii).